A 428-amino-acid polypeptide reads, in one-letter code: Immunoglobulin superfamily containing leucine-rich repeat protein (428 aa).

Residues 1–18 (MRALCLLCWAVLLNLVRA) form the signal peptide. The LRRNT domain maps to 19–50 (CPEPCDCGEKYGFQIADCAYRDLEGVPPGFPA). Residue Asn-51 is glycosylated (N-linked (GlcNAc...) asparagine). 5 LRR repeats span residues 51 to 72 (NVTTLSLSANRLPGLPEGAFRE), 75 to 98 (LLQSLWLAHNEIRSVAIGALAPLS), 99 to 122 (HLKSLDLSHNLLSEFAWSDLHNLS), 123 to 144 (ALQLLKMDSNELAFIPRDAFSS), and 147 to 168 (ALRSLQLNHNRLHALAEGTFAP). Residues 180-231 (NPFDCTCGIVWFKTWALASAVSIPEQDNIACTTPHVLKGIPLGRLPPLPCSA) enclose the LRRCT domain. Positions 232-343 (PSVQLSYQPS…GSAESSVNVA (112 aa)) constitute an Ig-like domain. Cys-257 and Cys-327 are disulfide-bonded. An N-linked (GlcNAc...) asparagine glycan is attached at Asn-309.

In terms of tissue distribution, detected in thyroid, heart, retina and spinal cord.

Its subcellular location is the secreted. This Mus musculus (Mouse) protein is Immunoglobulin superfamily containing leucine-rich repeat protein (Islr).